Reading from the N-terminus, the 212-residue chain is Large ribosomal subunit protein uL3 (212 aa).

The interval 119–146 (YQGNIKRWGQSRGPETHGSRYHRIPGSM) is disordered.

This sequence belongs to the universal ribosomal protein uL3 family. In terms of assembly, part of the 50S ribosomal subunit. Forms a cluster with proteins L14 and L19.

Functionally, one of the primary rRNA binding proteins, it binds directly near the 3'-end of the 23S rRNA, where it nucleates assembly of the 50S subunit. The polypeptide is Large ribosomal subunit protein uL3 (Lactobacillus helveticus (strain DPC 4571)).